Here is a 379-residue protein sequence, read N- to C-terminus: Transcription termination factor 1a, mitochondrial (379 aa).

The transit peptide at 1-37 (MASRNIWCVRRNFLFDLRDWMLQYSAEVFLKSISFRP) directs the protein to the mitochondrion. Interaction with DNA regions lie at residues 151–152 (RS), 229–233 (QSTKR), 306–313 (SEKKFNDK), 337–340 (SINT), and 366–373 (SQRRYEAK).

The protein belongs to the mTERF family. Monomer. Phosphoprotein with mostly four phosphate groups. While the DNA-binding activity is unaffected by the phosphorylation state, only the phosphorylated form of the protein is active for termination activity. Functioning seems to be regulated by phosphorylation. As to expression, predominantly expressed in heart and liver, with extremely low levels in other tissues. Expressed strongly in the heart and at lower levels in brain, liver and kidney.

The protein localises to the mitochondrion. In terms of biological role, transcription termination factor. Binds to a 28 bp region within the tRNA(Leu(uur)) gene at a position immediately adjacent to and downstream of the 16S rRNA gene; this region comprises a tridecamer sequence critical for directing accurate termination. Binds DNA along the major grove and promotes DNA bending and partial unwinding. Promotes base flipping. Transcription termination activity appears to be polarized with highest specificity for transcripts initiated on the light strand. The sequence is that of Transcription termination factor 1a, mitochondrial (Mterf1a) from Mus musculus (Mouse).